The following is a 158-amino-acid chain: Snaclec alboaggregin-D subunit alpha (158 aa).

An N-terminal signal peptide occupies residues Met1–Ala23. 3 disulfides stabilise this stretch: Cys27–Cys38, Cys55–Cys152, and Cys127–Cys144. The C-type lectin domain maps to Tyr34–Lys153.

It belongs to the snaclec family. As to quaternary structure, tetramer of heterodimers of alpha and beta subunits (alphabeta)(4); disulfide-linked. In terms of tissue distribution, expressed by the venom gland.

Its subcellular location is the secreted. Its function is as follows. Snaclec that induces human platelet aggregation in the absence of any cofactor with the EC(50) of 0.25 nM and causes tyrosine phosphorylation in human platelets. Antibodies against either platelet GPIbalpha (GP1BA) or GPVI (GP6) inhibit alboaggregin D-induced platelet aggregation. Only the combination of these two antibodies completely inhibit aggregation, suggesting that it acts through both GPIbalpha (GP1BA) and GPVI (GP6). The chain is Snaclec alboaggregin-D subunit alpha from Trimeresurus albolabris (White-lipped pit viper).